A 390-amino-acid polypeptide reads, in one-letter code: Pyruvate dehydrogenase E1 component subunit alpha, somatic form, mitochondrial (390 aa).

The N-terminal 29 residues, 1 to 29 (MRKMLAAVSRVLSGVAQKPASRVLVASRH), are a transit peptide targeting the mitochondrion. Lysine 63 carries the N6-acetyllysine; alternate modification. The residue at position 63 (lysine 63) is an N6-succinyllysine; alternate. Pyruvate-binding residues include histidine 92, tyrosine 118, arginine 119, alanine 157, glycine 165, valine 167, aspartate 196, glycine 197, alanine 198, asparagine 225, and tyrosine 227. Tyrosine 118 and arginine 119 together coordinate thiamine diphosphate. Glycine 165, valine 167, aspartate 196, glycine 197, alanine 198, and asparagine 225 together coordinate thiamine diphosphate. Aspartate 196 is a Mg(2+) binding site. The Mg(2+) site is built by asparagine 225 and tyrosine 227. Position 232 is a phosphoserine; by PDK1 (serine 232). The residue at position 244 (lysine 244) is an N6-acetyllysine; alternate. N6-succinyllysine; alternate is present on lysine 244. At lysine 267 the chain carries N6-acetyllysine. At lysine 277 the chain carries N6-succinyllysine. Position 292 (histidine 292) interacts with thiamine diphosphate. At serine 293 the chain carries Phosphoserine; by PDK1, PDK2, PDK3 and PDK4. Phosphoserine is present on serine 295. At serine 300 the chain carries Phosphoserine; by PDK1, PDK2, PDK3 and PDK4. Tyrosine 301 is subject to Phosphotyrosine. The residue at position 313 (lysine 313) is an N6-acetyllysine; alternate. Lysine 313 bears the N6-succinyllysine; alternate mark. N6-acetyllysine occurs at positions 321 and 336. At lysine 385 the chain carries N6-succinyllysine.

As to quaternary structure, heterotetramer of two PDHA1 and two PDHB subunits. The heterotetramer interacts with DLAT, and is part of the multimeric pyruvate dehydrogenase complex that contains multiple copies of pyruvate dehydrogenase (E1), dihydrolipoamide acetyltransferase (DLAT, E2) and lipoamide dehydrogenase (DLD, E3). These subunits are bound to an inner core composed of about 48 DLAT and 12 PDHX molecules. Thiamine diphosphate is required as a cofactor. Mg(2+) serves as cofactor. In terms of processing, phosphorylation at Ser-232, Ser-293 and Ser-300 by PDK family kinases inactivates the enzyme; for this phosphorylation at a single site is sufficient. Phosphorylation at Ser-293 interferes with access to active site, and thereby inactivates the enzyme. Dephosphorylation at all three sites, i.e. at Ser-232, Ser-293 and Ser-300, is required for reactivation. Post-translationally, acetylation alters the phosphorylation pattern. Deacetylated by SIRT3.

The protein localises to the mitochondrion matrix. The catalysed reaction is N(6)-[(R)-lipoyl]-L-lysyl-[protein] + pyruvate + H(+) = N(6)-[(R)-S(8)-acetyldihydrolipoyl]-L-lysyl-[protein] + CO2. Its activity is regulated as follows. Pyruvate dehydrogenase activity is inhibited by phosphorylation of PDHA1; it is reactivated by dephosphorylation. The pyruvate dehydrogenase complex catalyzes the overall conversion of pyruvate to acetyl-CoA and CO(2), and thereby links the glycolytic pathway to the tricarboxylic cycle. The protein is Pyruvate dehydrogenase E1 component subunit alpha, somatic form, mitochondrial (PDHA1) of Bos taurus (Bovine).